Consider the following 393-residue polypeptide: Methylthioribose kinase (393 aa).

Residues Asn38, Lys53, and 107–109 (EDL) each bind ATP. Asp225 provides a ligand contact to substrate. 242-244 (DPE) serves as a coordination point for ATP. Substrate is bound at residue Arg332.

It belongs to the methylthioribose kinase family. In terms of assembly, homodimer.

The catalysed reaction is 5-(methylsulfanyl)-D-ribose + ATP = 5-(methylsulfanyl)-alpha-D-ribose 1-phosphate + ADP + H(+). It participates in amino-acid biosynthesis; L-methionine biosynthesis via salvage pathway; S-methyl-5-thio-alpha-D-ribose 1-phosphate from S-methyl-5'-thioadenosine (hydrolase route): step 2/2. Its function is as follows. Catalyzes the phosphorylation of methylthioribose into methylthioribose-1-phosphate. The protein is Methylthioribose kinase of Bacillus cereus (strain B4264).